Here is a 754-residue protein sequence, read N- to C-terminus: 5-methyltetrahydropteroyltriglutamate--homocysteine methyltransferase (754 aa).

5-methyltetrahydropteroyltri-L-glutamate-binding positions include 15–18 and Lys-114; that span reads RELK. Residues 430-432 and Glu-483 contribute to the L-homocysteine site; that span reads IGS. Residues 430-432 and Glu-483 each bind L-methionine; that span reads IGS. Residues 514-515 and Trp-560 contribute to the 5-methyltetrahydropteroyltri-L-glutamate site; that span reads RC. Asp-598 is a binding site for L-homocysteine. Residue Asp-598 participates in L-methionine binding. Glu-604 is a binding site for 5-methyltetrahydropteroyltri-L-glutamate. Zn(2+)-binding residues include His-641, Cys-643, and Glu-665. His-694 serves as the catalytic Proton donor. Position 726 (Cys-726) interacts with Zn(2+).

Belongs to the vitamin-B12 independent methionine synthase family. It depends on Zn(2+) as a cofactor.

It catalyses the reaction 5-methyltetrahydropteroyltri-L-glutamate + L-homocysteine = tetrahydropteroyltri-L-glutamate + L-methionine. It participates in amino-acid biosynthesis; L-methionine biosynthesis via de novo pathway; L-methionine from L-homocysteine (MetE route): step 1/1. Its function is as follows. Catalyzes the transfer of a methyl group from 5-methyltetrahydrofolate to homocysteine resulting in methionine formation. This is 5-methyltetrahydropteroyltriglutamate--homocysteine methyltransferase from Campylobacter jejuni subsp. jejuni serotype O:2 (strain ATCC 700819 / NCTC 11168).